The primary structure comprises 198 residues: Armadillo repeat-containing protein 7 (198 aa).

ARM repeat units lie at residues 57–99 (QVLD…HAGG) and 100–140 (VPLI…TATP). Position 169 is a phosphoserine (Ser169).

In terms of assembly, component of the minor spliceosome. Within this complex, interacts with RBM48.

Its function is as follows. As a component of the minor spliceosome, involved in the splicing of U12-type introns in pre-mRNAs. The sequence is that of Armadillo repeat-containing protein 7 (ARMC7) from Homo sapiens (Human).